The sequence spans 285 residues: NAD kinase (285 aa).

The active-site Proton acceptor is aspartate 68. NAD(+) is bound by residues 68-69, 142-143, arginine 153, lysine 170, aspartate 172, and glutamine 242; these read DG and ND.

It belongs to the NAD kinase family. A divalent metal cation is required as a cofactor.

Its subcellular location is the cytoplasm. It catalyses the reaction NAD(+) + ATP = ADP + NADP(+) + H(+). Involved in the regulation of the intracellular balance of NAD and NADP, and is a key enzyme in the biosynthesis of NADP. Catalyzes specifically the phosphorylation on 2'-hydroxyl of the adenosine moiety of NAD to yield NADP. The polypeptide is NAD kinase (Koribacter versatilis (strain Ellin345)).